We begin with the raw amino-acid sequence, 264 residues long: Phosphonoacetaldehyde hydrolase (264 aa).

The active-site Nucleophile is the aspartate 9. Mg(2+) is bound by residues aspartate 9 and alanine 11. Lysine 50 (schiff-base intermediate with substrate) is an active-site residue. Mg(2+) is bound at residue aspartate 183.

It belongs to the HAD-like hydrolase superfamily. PhnX family. As to quaternary structure, homodimer. It depends on Mg(2+) as a cofactor.

The catalysed reaction is phosphonoacetaldehyde + H2O = acetaldehyde + phosphate + H(+). Involved in phosphonate degradation. The protein is Phosphonoacetaldehyde hydrolase of Bacillus mycoides (strain KBAB4) (Bacillus weihenstephanensis).